The primary structure comprises 239 residues: 1-(5-phosphoribosyl)-5-[(5-phosphoribosylamino)methylideneamino] imidazole-4-carboxamide isomerase (239 aa).

Catalysis depends on Asp9, which acts as the Proton acceptor. Asp131 serves as the catalytic Proton donor.

The protein belongs to the HisA/HisF family.

Its subcellular location is the cytoplasm. It carries out the reaction 1-(5-phospho-beta-D-ribosyl)-5-[(5-phospho-beta-D-ribosylamino)methylideneamino]imidazole-4-carboxamide = 5-[(5-phospho-1-deoxy-D-ribulos-1-ylimino)methylamino]-1-(5-phospho-beta-D-ribosyl)imidazole-4-carboxamide. The protein operates within amino-acid biosynthesis; L-histidine biosynthesis; L-histidine from 5-phospho-alpha-D-ribose 1-diphosphate: step 4/9. The protein is 1-(5-phosphoribosyl)-5-[(5-phosphoribosylamino)methylideneamino] imidazole-4-carboxamide isomerase of Bacteroides fragilis (strain YCH46).